A 220-amino-acid chain; its full sequence is pH-response regulator palI/RIM9 homolog 1 (220 aa).

Topologically, residues 1–5 are cytoplasmic; it reads MSHFK. The helical transmembrane segment at 6–26 threads the bilayer; that stretch reads IVFLTSLSLALVFELFNTISV. Residues 27–89 lie on the Extracellular side of the membrane; sequence PITSHLFISE…NHAKYALSKL (63 aa). A helical membrane pass occupies residues 90 to 110; sequence LLVHVLSFVCVLVFWLFAILI. Topologically, residues 111–121 are cytoplasmic; that stretch reads CIKWLNTSKSV. Residues 122 to 142 traverse the membrane as a helical segment; that stretch reads LLFAVGWSMVTFMVSLLGFLI. At 143 to 155 the chain is on the extracellular side; it reads DVLMFASHVTWSS. A helical transmembrane segment spans residues 156-176; the sequence is WLMLVSAFFVALSGILLCLMI. Topologically, residues 177–220 are cytoplasmic; the sequence is RDLSYRRFVKLQGEVDVCVPMTEPRDPDELNEIWKKKTSKREIL.

Belongs to the palI/RIM9 family.

It is found in the cell membrane. Its function is as follows. Required for the proteolytic cleavage of the transcription factor RIM101 in response to alkaline ambient pH. In Kluyveromyces lactis (strain ATCC 8585 / CBS 2359 / DSM 70799 / NBRC 1267 / NRRL Y-1140 / WM37) (Yeast), this protein is pH-response regulator palI/RIM9 homolog 1.